The primary structure comprises 356 residues: DNA polymerase IV (356 aa).

Positions 4–185 constitute a UmuC domain; that stretch reads IIHIDMDCYY…LALGKIPGVG (182 aa). Mg(2+) contacts are provided by Asp8 and Asp103. Glu104 is an active-site residue.

It belongs to the DNA polymerase type-Y family. As to quaternary structure, monomer. Mg(2+) serves as cofactor.

The protein localises to the cytoplasm. The catalysed reaction is DNA(n) + a 2'-deoxyribonucleoside 5'-triphosphate = DNA(n+1) + diphosphate. Functionally, poorly processive, error-prone DNA polymerase involved in untargeted mutagenesis. Copies undamaged DNA at stalled replication forks, which arise in vivo from mismatched or misaligned primer ends. These misaligned primers can be extended by PolIV. Exhibits no 3'-5' exonuclease (proofreading) activity. May be involved in translesional synthesis, in conjunction with the beta clamp from PolIII. This chain is DNA polymerase IV, found in Pseudoalteromonas atlantica (strain T6c / ATCC BAA-1087).